A 209-amino-acid chain; its full sequence is Chromophore lyase CpcT/CpeT 1 (209 aa).

It belongs to the CpcT/CpeT biliprotein lyase family.

Its function is as follows. Covalently attaches a chromophore to Cys residue(s) of phycobiliproteins. The protein is Chromophore lyase CpcT/CpeT 1 of Trichodesmium erythraeum (strain IMS101).